The sequence spans 254 residues: Probable WRKY transcription factor 67 (254 aa).

Positions 102 to 170 (SRTMCPNDGF…YLGKHVCKAF (69 aa)) form a DNA-binding region, WRKY.

It belongs to the WRKY group III family.

Its subcellular location is the nucleus. Its function is as follows. Transcription factor. Interacts specifically with the W box (5'-(T)TGAC[CT]-3'), a frequently occurring elicitor-responsive cis-acting element. The sequence is that of Probable WRKY transcription factor 67 (WRKY67) from Arabidopsis thaliana (Mouse-ear cress).